The primary structure comprises 114 residues: MVDQNPKRSGEPPVWLMFGAGGTVSAIFLPVVILIIGLLLPFGLVDAHNLITFAYSWIGKLVILVLTIFPMWCGLHRIHHGMHDLKVHVPAGGFIFYGLATIYTVWVLFAVINL.

A run of 3 helical transmembrane segments spans residues V24 to L44, L50 to P70, and G92 to I112.

It belongs to the FrdD family. In terms of assembly, part of an enzyme complex containing four subunits: a flavoprotein (FrdA), an iron-sulfur protein (FrdB), and two hydrophobic anchor proteins (FrdC and FrdD).

Its subcellular location is the cell inner membrane. In terms of biological role, anchors the catalytic components of the fumarate reductase complex to the cell membrane, binds quinones. In Haemophilus influenzae (strain 86-028NP), this protein is Fumarate reductase subunit D.